A 301-amino-acid chain; its full sequence is 33 kDa chaperonin (301 aa).

2 cysteine pairs are disulfide-bonded: cysteine 240–cysteine 242 and cysteine 273–cysteine 276.

The protein belongs to the HSP33 family. Post-translationally, under oxidizing conditions two disulfide bonds are formed involving the reactive cysteines. Under reducing conditions zinc is bound to the reactive cysteines and the protein is inactive.

The protein localises to the cytoplasm. Functionally, redox regulated molecular chaperone. Protects both thermally unfolding and oxidatively damaged proteins from irreversible aggregation. Plays an important role in the bacterial defense system toward oxidative stress. This Rippkaea orientalis (strain PCC 8801 / RF-1) (Cyanothece sp. (strain PCC 8801)) protein is 33 kDa chaperonin.